The primary structure comprises 75 residues: Translation initiation factor IF-1 1 (75 aa).

An S1-like domain is found at 1-74 (MARSDMIEVD…TRGRIVYRYR (74 aa)).

It belongs to the IF-1 family. As to quaternary structure, component of the 30S ribosomal translation pre-initiation complex which assembles on the 30S ribosome in the order IF-2 and IF-3, IF-1 and N-formylmethionyl-tRNA(fMet); mRNA recruitment can occur at any time during PIC assembly.

It is found in the cytoplasm. Functionally, one of the essential components for the initiation of protein synthesis. Stabilizes the binding of IF-2 and IF-3 on the 30S subunit to which N-formylmethionyl-tRNA(fMet) subsequently binds. Helps modulate mRNA selection, yielding the 30S pre-initiation complex (PIC). Upon addition of the 50S ribosomal subunit IF-1, IF-2 and IF-3 are released leaving the mature 70S translation initiation complex. The protein is Translation initiation factor IF-1 1 of Symbiobacterium thermophilum (strain DSM 24528 / JCM 14929 / IAM 14863 / T).